The following is a 294-amino-acid chain: MKRLSSSDSMCGLISTSTDEQSPRGYGSNYQSMLEGYDEDATLIEEYSGNHHHMGLSEKKRRLKVDQVKALEKNFELENKLEPERKTKLAQELGLQPRQVAVWFQNRRARWKTKQLEKDYGVLKGQYDSLRHNFDSLRRDNDSLLQEISKIKAKVNGEEDNNNNKAITEGVKEEEVHKTDSIPSSPLQFLEHSSGFNYRRSFTDLRDLLPNSTVVEAGSSDSCDSSAVLNDETSSDNGRLTPPVTVTGGSFLQFVKTEQTEDHEDFLSGEEACGFFSDEQPPSLHWYSASDHWT.

Positions M1–E20 are enriched in polar residues. Residues M1–Q31 are disordered. Residues L56–Q115 constitute a DNA-binding region (homeobox). The interval L116–I151 is leucine-zipper. Residues S219–G238 show a composition bias toward polar residues. The tract at residues S219–T241 is disordered.

It belongs to the HD-ZIP homeobox family. Class I subfamily. In terms of tissue distribution, widely expressed with a lower level in siliques.

Its subcellular location is the nucleus. In terms of biological role, probable transcription factor that may function as a negative regulator of the flowering time response to photoperiod. May act to repress cell expansion during plant development. The protein is Homeobox-leucine zipper protein ATHB-16 (ATHB-16) of Arabidopsis thaliana (Mouse-ear cress).